Here is a 316-residue protein sequence, read N- to C-terminus: MALYELFSHPVERSYRAGLCSKAALFLLLAAALTYIPPLLVAFRSHGFWLKRSSYEEQPTVRFQHQVLLVALLGPESDGFLAWSTFPAFNRLQGDRLRVPLVSTREEDRNQDGKTDMLHFKLELPLQSTEHVLGVQLILTFSYRLHRMATLVMQSMAFLQSSFPVPGSQLYVNGDLRLQQKQPLSCGGLDARYNISVINGTSPFAYDYDLTHIVAAYQERNVTTVLNDPNPIWLVGRAADAPFVINAIIRYPVEVISYQPGFWEMVKFAWVQYVSILLIFLWVFERIKIFVFQNQVVTTIPVTVTPRGDLCKEHLS.

The helical transmembrane segment at 23 to 43 threads the bilayer; it reads AALFLLLAAALTYIPPLLVAF. N-linked (GlcNAc...) asparagine glycosylation is found at asparagine 194, asparagine 199, and asparagine 221. The chain crosses the membrane as a helical span at residues 262-282; sequence FWEMVKFAWVQYVSILLIFLW.

This sequence belongs to the TMEM231 family. As to quaternary structure, part of the tectonic-like complex (also named B9 complex). Interacts with TMEM107.

The protein localises to the cell projection. It is found in the cilium membrane. In terms of biological role, transmembrane component of the tectonic-like complex, a complex localized at the transition zone of primary cilia and acting as a barrier that prevents diffusion of transmembrane proteins between the cilia and plasma membranes. Required for ciliogenesis and sonic hedgehog/SHH signaling. The protein is Transmembrane protein 231 (TMEM231) of Homo sapiens (Human).